Here is a 127-residue protein sequence, read N- to C-terminus: Apolipoprotein C-IV (127 aa).

The N-terminal stretch at 1–27 (MSLLRNRLQDLPALCLCVLVLACIGAC) is a signal peptide.

Belongs to the apolipoprotein C4 family.

It localises to the secreted. In terms of biological role, may participate in lipoprotein metabolism. This chain is Apolipoprotein C-IV (APOC4), found in Papio hamadryas (Hamadryas baboon).